A 693-amino-acid chain; its full sequence is tRNA (guanine(37)-N(1))-methyltransferase (693 aa).

Residues arginine 327, 365-366 (DI), and 392-393 (DA) each bind S-adenosyl-L-methionine. The interval 497 to 572 (AGDSHQSNSH…QKAEDAPTNE (76 aa)) is disordered. Low complexity predominate over residues 500 to 512 (SHQSNSHQSNPHE). Asparagine 591 contributes to the S-adenosyl-L-methionine binding site.

It belongs to the class I-like SAM-binding methyltransferase superfamily. TRM5/TYW2 family. Monomer.

It localises to the mitochondrion matrix. Its subcellular location is the nucleus. The protein localises to the cytoplasm. It carries out the reaction guanosine(37) in tRNA + S-adenosyl-L-methionine = N(1)-methylguanosine(37) in tRNA + S-adenosyl-L-homocysteine + H(+). Specifically methylates the N1 position of guanosine-37 in various cytoplasmic and mitochondrial tRNAs. Methylation is not dependent on the nature of the nucleoside 5' of the target nucleoside. This is the first step in the biosynthesis of wybutosine (yW), a modified base adjacent to the anticodon of tRNAs and required for accurate decoding. This chain is tRNA (guanine(37)-N(1))-methyltransferase, found in Plasmodium vivax (strain Salvador I).